The chain runs to 249 residues: Molybdate/tungstate transport system permease protein WtpB (249 aa).

At 1-10 (MDRRDYLAYA) the chain is on the cytoplasmic side. A helical transmembrane segment spans residues 11 to 31 (FAGLGAFLVAFIGLPLFMIFI). The Extracellular portion of the chain corresponds to 32-56 (KQAYDLEALQRTLVDPLVIESIRNS). The 187-residue stretch at 53–239 (IRNSLFTATV…TISLAVFIFL (187 aa)) folds into the ABC transmembrane type-1 domain. The helical transmembrane segment at 57–77 (LFTATVSTLLGILFGVPLGYV) threads the bilayer. The Cytoplasmic segment spans residues 78-96 (LARKEFKGKNFVQALIDTP). Residues 97–117 (IVIPHSVVGIMLLVTFSDAIL) traverse the membrane as a helical segment. Position 118 (Asp-118) is a topological domain, extracellular. A helical membrane pass occupies residues 119–139 (NYKGIVAVMLFVSSPFIVNSA). Residues 140–179 (RDGFLSVDEKLEYVARTLGASGLRTFFSVTLPNAIHSIAS) lie on the Cytoplasmic side of the membrane. A helical transmembrane segment spans residues 180–200 (GAIMAWARAISEVGAILIVAY). The Extracellular segment spans residues 201-223 (YPKTAQVLIMEYFNNYGLRASRP). Residues 224–244 (IAVILVTISLAVFIFLRWLVG) form a helical membrane-spanning segment. Residues 245–249 (RGRNA) are Cytoplasmic-facing.

It belongs to the binding-protein-dependent transport system permease family. The complex is composed of two ATP-binding proteins (WtpC), two transmembrane proteins (WtpB) and a solute-binding protein (WtpA).

It is found in the cell membrane. In terms of biological role, part of the ABC transporter complex WtpABC involved in molybdate/tungstate import. Probably responsible for the translocation of the substrate across the membrane. This is Molybdate/tungstate transport system permease protein WtpB from Pyrococcus furiosus (strain ATCC 43587 / DSM 3638 / JCM 8422 / Vc1).